We begin with the raw amino-acid sequence, 531 residues long: Probable rhamnogalacturonate lyase A (531 aa).

The N-terminal stretch at 1–20 is a signal peptide; that stretch reads MLSKALFFSSLPLWAKVASA. 2 cysteine pairs are disulfide-bonded: C50–C93 and C184–C193. Residue N351 is glycosylated (N-linked (GlcNAc...) asparagine).

The protein belongs to the polysaccharide lyase 4 family.

It is found in the secreted. It carries out the reaction Endotype eliminative cleavage of L-alpha-rhamnopyranosyl-(1-&gt;4)-alpha-D-galactopyranosyluronic acid bonds of rhamnogalacturonan I domains in ramified hairy regions of pectin leaving L-rhamnopyranose at the reducing end and 4-deoxy-4,5-unsaturated D-galactopyranosyluronic acid at the non-reducing end.. In terms of biological role, pectinolytic enzymes consist of four classes of enzymes: pectin lyase, polygalacturonase, pectin methylesterase and rhamnogalacturonase. Degrades the rhamnogalacturonan I (RG-I) backbone of pectin. The polypeptide is Probable rhamnogalacturonate lyase A (rglA) (Aspergillus terreus (strain NIH 2624 / FGSC A1156)).